Here is a 226-residue protein sequence, read N- to C-terminus: MTNIKHLAIIMDGNARWAATHNLPKSEGHRAGADKVHELLPEFINLKIPYITLYTFSSENWQRSNTEISFLMRLLNIYLKKELDNLHKNGIKIKVIGRLNLLSDSLQKQINNAIELTKDNNKLTLCIAFSYGSRQEITDACTKIIASGKTEILESDIQNALYDPEMPDVDLLIRPGGVFRISNFLLWQAAYAELYFSQKYWPDFNKEDIINAIDDYSKRKRTFGKR.

Residue D12 is part of the active site. Position 12 (D12) interacts with Mg(2+). Substrate is bound by residues 13 to 16 (GNAR), W17, K25, H29, and 57 to 59 (SSE). Residue N60 is the Proton acceptor of the active site. Residues W61, R63, R174, and 180-182 (RIS) each bind substrate. E193 is a binding site for Mg(2+).

This sequence belongs to the UPP synthase family. Homodimer. Mg(2+) is required as a cofactor.

Functionally, catalyzes the condensation of isopentenyl diphosphate (IPP) with allylic pyrophosphates generating different type of terpenoids. In Rickettsia bellii (strain RML369-C), this protein is Isoprenyl transferase.